Reading from the N-terminus, the 228-residue chain is Chromatin remodeling protein SHL (228 aa).

The region spanning 21–137 (KSIQEGDAVL…STTGAFDPDR (117 aa)) is the BAH domain. The PHD-type zinc finger occupies 139–190 (TVFCKCEMPYNPDDLMVQCEECSEWFHPSCIGTTIEEAKKPDNFYCEECSPQ). A compositionally biased stretch (polar residues) spans 191–203 (QQNLHNSNSTSNN). A disordered region spans residues 191–228 (QQNLHNSNSTSNNRDAKVNGKRSLEVTKSKNKHTKRPG). The span at 204-218 (RDAKVNGKRSLEVTK) shows a compositional bias: basic and acidic residues. Residues 210–217 (GKRSLEVT) carry the Nuclear localization signal motif. Over residues 219 to 228 (SKNKHTKRPG) the composition is skewed to basic residues.

This sequence belongs to the SHL1/EBS protein family. As to quaternary structure, recognizes di- and trimethylated histone H3 at lysine 4. Interacts with HDA6. Interacts with DEK3. As to expression, expressed ubiquitously. Mostly expressed in roots, stems, leaves and flowers, and, to a lower extent, in siliques.

The protein localises to the nucleus. Chromatin remodeling factor that binds to methylated histone (e.g. H3K4me2/3) to prevent their acetylation (e.g. H3K9K14Ac), likely by recruiting histone deacetylase (HDAC) complexes, and thus regulate the transcription of target genes. Required during development and for fertility, probably by modulating developmental gene expression. Promotes development speed, but at fitness cost. Involved in the chromatin-mediated repression of floral initiation and controls genes regulating flowering. Negatively regulates the expression of the floral integrator SOC1, by preventing high levels of H3 acetylation, thus maintaining an inactive chromatin conformation. The polypeptide is Chromatin remodeling protein SHL (Arabidopsis thaliana (Mouse-ear cress)).